Reading from the N-terminus, the 901-residue chain is Protein translocase subunit SecA (901 aa).

ATP contacts are provided by residues Q87, 105 to 109 (GEGKT), and D512. A disordered region spans residues 852-901 (AQMQQLSHQDDDSAAAAALAAQTGDRKVGRNDPCPCGSGKKYKQCHGRLS). Zn(2+)-binding residues include C885, C887, C896, and H897. The segment covering 891–901 (KKYKQCHGRLS) has biased composition (basic residues).

Belongs to the SecA family. Monomer and homodimer. Part of the essential Sec protein translocation apparatus which comprises SecA, SecYEG and auxiliary proteins SecDF-YajC and YidC. It depends on Zn(2+) as a cofactor.

Its subcellular location is the cell inner membrane. The protein localises to the cytoplasm. It carries out the reaction ATP + H2O + cellular proteinSide 1 = ADP + phosphate + cellular proteinSide 2.. Part of the Sec protein translocase complex. Interacts with the SecYEG preprotein conducting channel. Has a central role in coupling the hydrolysis of ATP to the transfer of proteins into and across the cell membrane, serving both as a receptor for the preprotein-SecB complex and as an ATP-driven molecular motor driving the stepwise translocation of polypeptide chains across the membrane. The protein is Protein translocase subunit SecA of Citrobacter koseri (strain ATCC BAA-895 / CDC 4225-83 / SGSC4696).